A 482-amino-acid chain; its full sequence is Cilia- and flagella-associated protein 53 (482 aa).

Coiled-coil stretches lie at residues 9 to 40, 67 to 124, and 152 to 413; these read DARI…AVAE, ADLN…QALA, and IEER…AKDA. The interval 462-482 is disordered; sequence VNQTLSSTDPPVWHGRRKFDW.

It belongs to the CFAP53 family.

The protein localises to the cell projection. Its subcellular location is the cilium. It is found in the flagellum. In terms of biological role, may play a role in filopodium movement. The protein is Cilia- and flagella-associated protein 53 of Chlamydomonas reinhardtii (Chlamydomonas smithii).